Consider the following 1182-residue polypeptide: Tyrosine-protein kinase ABL2 (1182 aa).

Residues 1 to 42 (MGQQVGRVGEAPGLQQPQPRGIRGSSAARPSGRRRDPAGRTA) form a disordered region. A lipid anchor (N-myristoyl glycine) is attached at Gly2. The tract at residues 2–106 (GQQVGRVGEA…SKENLLGATE (105 aa)) is CAP. Residues 20–30 (RGIRGSSAARP) show a composition bias toward low complexity. A Phosphoserine modification is found at Ser97. One can recognise an SH3 domain in the interval 107–167 (SDPNLFVALY…PSNYITPVNS (61 aa)). Tyr116, Tyr161, Tyr174, Tyr185, Tyr218, and Tyr231 each carry phosphotyrosine. Residues 173-263 (WYHGPVSRSA…GLVTTLHYPA (91 aa)) enclose the SH2 domain. Tyr261 carries the post-translational modification Phosphotyrosine; by ABL1 and autocatalysis. Tyr272 bears the Phosphotyrosine; by autocatalysis mark. A Phosphoserine modification is found at Ser275. The region spanning 288–539 (ITMKHKLGGG…PSFAETHQAF (252 aa)) is the Protein kinase domain. 294 to 302 (LGGGQYGEV) contributes to the ATP binding site. A phosphotyrosine mark is found at Tyr299 and Tyr303. Residues Lys317 and 362–368 (EYMPYGN) each bind ATP. Catalysis depends on Asp409, which acts as the Proton acceptor. The short motif at 427-451 (DFGLSRLMTGDTYTAHAGAKFPIKW) is the Kinase activation loop element. Residue Tyr439 is modified to Phosphotyrosine; by autocatalysis and SRC-type Tyr-kinases. Phosphotyrosine is present on Tyr459. Tyr568 is modified (phosphotyrosine; by autocatalysis). Phosphoserine occurs at positions 606, 621, 632, 634, and 656. Disordered stretches follow at residues 612–642 (IRST…DAKE) and 655–674 (SSFM…SSFR). Positions 659–661 (KKR) match the Nuclear localization signal motif. Ser670, Ser671, and Ser672 each carry phosphoserine. Tyr684 bears the Phosphotyrosine; by autocatalysis mark. The interval 695–930 (SLQNADGFSV…AVLPTTHNHK (236 aa)) is F-actin-binding. At Tyr719 the chain carries Phosphotyrosine. The disordered stretch occupies residues 765 to 796 (LRAGKPTASDDTSKPFPRSNSTSSMSSGLPEQ). Lys778 is modified (N6-acetyllysine). The span at 782 to 793 (RSNSTSSMSSGL) shows a compositional bias: polar residues. Ser785 is modified (phosphoserine). Residue Thr802 is modified to Phosphothreonine. Positions 809–825 (RSKLQLERTVSTSSQPE) are enriched in polar residues. Residues 809–858 (RSKLQLERTVSTSSQPEENVDRANDMLPKKSEEGAAPARERPKAKLLPRG) form a disordered region. Phosphoserine occurs at positions 819 and 822. Over residues 827-851 (NVDRANDMLPKKSEEGAAPARERPK) the composition is skewed to basic and acidic residues. 2 positions are modified to phosphoserine: Ser915 and Ser936. Residues 964–1059 (HQVTSSGDKD…TSSISPAKMA (96 aa)) are disordered. The F-actin-binding stretch occupies residues 1020 to 1182 (EGGKKAAPGP…VQEISDVVQR (163 aa)).

This sequence belongs to the protein kinase superfamily. Tyr protein kinase family. ABL subfamily. In terms of assembly, interacts with PSMA7. Interacts with CTTN. Found in a complex with ABL1, ABL2, CRK and UNC119; leading to the inhibition of CRK phosphorylation by ABL kinases. Mg(2+) is required as a cofactor. It depends on Mn(2+) as a cofactor. Phosphorylated at Tyr-261 by ABL1 in response to oxidative stress. Phosphorylated by PDGFRB. Post-translationally, polyubiquitinated. Polyubiquitination of ABL2 leads to degradation. Most abundant in adult mouse brain, especially in synapse-rich regions.

It is found in the cytoplasm. Its subcellular location is the cytoskeleton. It catalyses the reaction L-tyrosyl-[protein] + ATP = O-phospho-L-tyrosyl-[protein] + ADP + H(+). Its activity is regulated as follows. Stabilized in the inactive form by an association between the SH3 domain and the SH2-TK linker region, interactions of the N-terminal cap, and contributions from an N-terminal myristoyl group and phospholipids. Activated by autophosphorylation as well as by SRC-family kinase-mediated phosphorylation. Activated by RIN1 binding to the SH2 and SH3 domains. Inhibited by imatinib mesylate (Gleevec). Phosphatidylinositol 4,5-bisphosphate (PIP2), a highly abundant phosphoinositide known to regulate cytoskeletal and membrane proteins, inhibits the tyrosine kinase activity. In terms of biological role, non-receptor tyrosine-protein kinase that plays an ABL1-overlapping role in key processes linked to cell growth and survival such as cytoskeleton remodeling in response to extracellular stimuli, cell motility and adhesion, receptor endocytosis, autophagy, DNA damage response and apoptosis. Coordinates actin remodeling through tyrosine phosphorylation of proteins controlling cytoskeleton dynamics like MYH10 (involved in movement); CTTN (involved in signaling); or TUBA1 and TUBB (microtubule subunits). Binds directly F-actin and regulates actin cytoskeletal structure through its F-actin-bundling activity. Involved in the regulation of cell adhesion and motility through phosphorylation of key regulators of these processes such as CRK, CRKL or DOK1. Required for adhesion-dependent phosphorylation of ARHGAP35 which promotes its association with RASA1, resulting in recruitment of ARHGAP35 to the cell periphery where it inhibits RHO. Phosphorylates multiple receptor tyrosine kinases like PDGFRB and other substrates which are involved in endocytosis regulation such as RIN1. In brain, may regulate neurotransmission by phosphorylating proteins at the synapse. Finally, functions as its own regulator through autocatalytic activity as well as through phosphorylation of its inhibitor, ABI1. Positively regulates chemokine-mediated T-cell migration, polarization, and homing to lymph nodes and immune-challenged tissues, potentially via activation of NEDD9/HEF1 and RAP1. This chain is Tyrosine-protein kinase ABL2, found in Mus musculus (Mouse).